Reading from the N-terminus, the 260-residue chain is Transcription factor BEE 1 (260 aa).

The segment at Glu118 to Glu139 is disordered. The region spanning Gln151 to Leu201 is the bHLH domain.

It is found in the nucleus. Its function is as follows. Positive regulator of brassinosteroid signaling. In Arabidopsis thaliana (Mouse-ear cress), this protein is Transcription factor BEE 1 (BEE1).